Here is a 116-residue protein sequence, read N- to C-terminus: Large ribosomal subunit protein bL17 (116 aa).

The protein belongs to the bacterial ribosomal protein bL17 family. Part of the 50S ribosomal subunit. Contacts protein L32.

The polypeptide is Large ribosomal subunit protein bL17 (Aliarcobacter butzleri (strain RM4018) (Arcobacter butzleri)).